Consider the following 140-residue polypeptide: Desampylase (140 aa).

Residues Thr-13–Ser-133 enclose the MPN domain. The Proton donor/acceptor role is filled by Glu-34. Zn(2+) contacts are provided by His-88, His-90, and Asp-101. The short motif at His-88–Asp-101 is the JAMM motif element.

The protein belongs to the peptidase M67B family. As to quaternary structure, exists in two major states: monomer and homodimer. Both conformational states are catalytically active. It depends on Zn(2+) as a cofactor. In terms of processing, the disulfide bridge probably stabilizes the PfJAMM1 homodimer at the optimal growth temperature of the hyperthermophile.

The enzyme catalyses an N(6)-[small archaeal modifier protein]-[protein]-L-lysine + H2O = a [protein]-L-lysine + a [small archaeal modifier protein].. With respect to regulation, inhibited by EDTA in vitro. Metalloprotease that displays desampylase (DSAMP) activity, cleaving ubiquitin-like small archaeal modifier proteins (SAMP1, SAMP2 and SAMP3) from protein conjugates (isopeptide- and linear-linked). Thus, likely regulates sampylation and the pools of 'free' SAMP available for protein modification. In vitro, is also able to cleave non-physiological ubiquitin (Ub) substrates, such as 'Met1-', 'Lys48-', and 'Lys63'-linked Ub dimers (Ub2), and to remove Ub tags from diverse proteins. This is Desampylase from Pyrococcus furiosus (strain ATCC 43587 / DSM 3638 / JCM 8422 / Vc1).